The following is a 334-amino-acid chain: B3 domain-containing protein LOC_Os12g40090 (334 aa).

A DNA-binding region (TF-B3 1) is located at residues 5 to 102 (RIRFFRLMTG…SFDVLIFDAS (98 aa)). The interval 142-178 (TSTPSVLIGSPHKASTSKKLSGKTKTNPRKEPEDPNC) is disordered. Low complexity predominate over residues 154 to 166 (KASTSKKLSGKTK). Positions 227 to 326 (FVVVLQTAHV…TMTVHVIGKA (100 aa)) form a DNA-binding region, TF-B3 2.

The protein localises to the nucleus. This is B3 domain-containing protein LOC_Os12g40090 from Oryza sativa subsp. japonica (Rice).